The chain runs to 146 residues: Snaclec coagulation factor IX/factor X-binding protein subunit B (146 aa).

A signal peptide spans 1–23 (MGRFIFMSFGFLVVFLSLSGTAA). The region spanning 24 to 146 (DCPSDWSSYE…MAQFVCEFQA (123 aa)) is the C-type lectin domain. 3 disulfide bridges follow: cysteine 25–cysteine 36, cysteine 53–cysteine 142, and cysteine 119–cysteine 134. Serine 64, glutamine 66, and glutamate 70 together coordinate Ca(2+). Glutamate 143 is a binding site for Ca(2+).

It belongs to the snaclec family. Heterodimer with subunit A of IX/X-bp or IX-bp; disulfide-linked. Expressed by the venom gland.

It localises to the secreted. Its function is as follows. When linked to subunit A of IX/X-bp, anticoagulant protein which binds to the gamma-carboxyglutamic acid-domain regions of factors IX (F9) and factor X (10) in the presence of calcium with a 1 to 1 stoichiometry. In terms of biological role, when linked to subunit A of IX-bp, anticoagulant protein which binds to the gamma-carboxyglutamic acid-domain regions of factor IX (but not to factor X) in the presence of calcium with a 1 to 1 stoichiometry. The protein is Snaclec coagulation factor IX/factor X-binding protein subunit B of Protobothrops flavoviridis (Habu).